We begin with the raw amino-acid sequence, 703 residues long: Polyribonucleotide nucleotidyltransferase (703 aa).

Mg(2+) is bound by residues Asp486 and Asp492. One can recognise a KH domain in the interval 553 to 614 (PRITTIWIKP…AACDAAIQMI (62 aa)). An S1 motif domain is found at 624 to 692 (GKLYMGTVKK…KQGKIKLSRK (69 aa)).

The protein belongs to the polyribonucleotide nucleotidyltransferase family. The cofactor is Mg(2+).

It localises to the cytoplasm. It carries out the reaction RNA(n+1) + phosphate = RNA(n) + a ribonucleoside 5'-diphosphate. In terms of biological role, involved in mRNA degradation. Catalyzes the phosphorolysis of single-stranded polyribonucleotides processively in the 3'- to 5'-direction. In Trichlorobacter lovleyi (strain ATCC BAA-1151 / DSM 17278 / SZ) (Geobacter lovleyi), this protein is Polyribonucleotide nucleotidyltransferase.